The sequence spans 247 residues: O-methyltransferase imqG (247 aa).

Residues Glu-84, 86 to 87, and Ala-138 each bind S-adenosyl-L-methionine; that span reads GT. Residues Asp-163, Asp-189, and Asn-190 each coordinate a divalent metal cation. Position 163 (Asp-163) interacts with substrate.

It belongs to the class I-like SAM-binding methyltransferase superfamily. Cation-dependent O-methyltransferase family. CCoAMT subfamily. As to quaternary structure, homodimer. A divalent metal cation is required as a cofactor.

The protein operates within secondary metabolite biosynthesis. Its function is as follows. O-methyltransferase; part of the gene cluster that mediates the biosynthesis of imizoquins A to D, tripeptide-derived alkaloids that serve a protective role against oxidative stress that are essential for normal germination. ImqB is a canonical three-module NRPS that assembles the tripeptide backbone of the imizoquins via condensation of Trp, Tyr, and Leu-derived precursors. N-methylation by imqF and phenol oxidation by imqC, followed by cyclization via the FAD-dependent oxidase imqH carry out the three-step transformation of L-tyrosine into tetrahydroisoquinoline. Importantly, this sequence requires the presence of a free amine in the tyrosine moiety, indicating that isoquinoline formation occurs prior to peptide bond formation. The imidazolidin-4-one ring of imizoquins could form following additional oxidation of the methyl-derived bridgehead carbon by imqH. Lastly, O-methylation by imqG and leucine hydroxylation by imqE complete biosynthesis of the imizoquins. The chain is O-methyltransferase imqG from Aspergillus flavus (strain ATCC 200026 / FGSC A1120 / IAM 13836 / NRRL 3357 / JCM 12722 / SRRC 167).